Here is a 352-residue protein sequence, read N- to C-terminus: NAD-dependent protein deacetylase sirtuin-2 (352 aa).

At Ser-16 the chain carries Phosphoserine. The 282-residue stretch at 20-301 (RLLDELTLEG…LALAELLGWK (282 aa)) folds into the Deacetylase sirtuin-type domain. Residues 48–52 (AGIST) and 58–60 (DFR) contribute to the NAD(+) site. At Ser-63 the chain carries Phosphoserine. An NAD(+)-binding site is contributed by 130–133 (QNID). The Proton acceptor role is filled by His-150. Residues Cys-158 and Cys-163 each contribute to the Zn(2+) site. Phosphoserine is present on Ser-170. Zn(2+)-binding residues include Cys-184 and Cys-187. Residues 225–226 (TS), 249–251 (NKE), and Cys-287 each bind NAD(+). A disordered region spans residues 314–352 (SIDAQSGAGVPNPSTSASPKKSPPPAKDEARTTEREKPQ). Over residues 324 to 333 (PNPSTSASPK) the composition is skewed to low complexity. Ser-331 and Ser-335 each carry phosphoserine. Positions 339-352 (AKDEARTTEREKPQ) are enriched in basic and acidic residues.

The protein belongs to the sirtuin family. Class I subfamily. In terms of assembly, interacts with CDC20, FOXO3 and FZR1. Associates with microtubules in primary cortical mature neurons. Homotrimer. Interacts (via both phosphorylated, unphosphorylated, active or inactive forms) with HDAC6; the interaction is necessary for the complex to interact with alpha-tubulin, suggesting that these proteins belong to a large complex that deacetylates the cytoskeleton. Interacts with FOXO1; the interaction is disrupted upon serum-starvation or oxidative stress, leading to increased level of acetylated FOXO1 and induction of autophagy. Interacts with RELA; the interaction occurs in the cytoplasm and is increased in a TNF-alpha-dependent manner. Interacts with HOXA10; the interaction is direct. Interacts with YWHAB and YWHAG; the interactions occur in a AKT-dependent manner and increase SIRT2-dependent TP53 deacetylation. Interacts with MAPK1/ERK2 and MAPK3/ERK1; the interactions increase SIRT2 stability and deacetylation activity. Interacts (phosphorylated form) with KMT5A isoform 2; the interaction is direct, stimulates KMT5A-mediated methyltransferase activity on histone at 'Lys-20' (H4K20me1) and is increased in a H(2)O(2)-induced oxidative stress-dependent manner. Interacts with G6PD; the interaction is enhanced by H(2)O(2) treatment. Interacts with a G1/S-specific cyclin E-CDK2 complex. Interacts with AURKA, CDK5R1 (p35 form) and CDK5 and HIF1A. Interacts with the tRNA ligase SARS1; recruited to the VEGFA promoter via interaction with SARS1. Interacts with BEX4; negatively regulates alpha-tubulin deacetylation by SIRT2. Interacts with MORN3; the interaction enhances the ubiquitination of p53/TP53. It depends on Zn(2+) as a cofactor. Phosphorylated at phosphoserine and phosphothreonine. Phosphorylated at Ser-331 by a mitotic kinase CDK1/cyclin B at the G2/M transition; phosphorylation regulates the delay in cell-cycle progression. Phosphorylated at Ser-331 by a mitotic kinase G1/S-specific cyclin E/Cdk2 complex; phosphorylation inactivates SIRT2-mediated alpha-tubulin deacetylation and thereby negatively regulates cell adhesion, cell migration and neurite outgrowth during neuronal differentiation. Phosphorylated by cyclin A/Cdk2 and p35-Cdk5 complexes and to a lesser extent by the cyclin D3/Cdk4 and cyclin B/Cdk1, in vitro. Dephosphorylated at Ser-331 by CDC14A and CDC14B around early anaphase. Post-translationally, acetylated by EP300; acetylation leads both to the decreased of SIRT2-mediated alpha-tubulin deacetylase activity and SIRT2-mediated down-regulation of TP53 transcriptional activity. In terms of processing, ubiquitinated.

The protein resides in the nucleus. Its subcellular location is the cytoplasm. The protein localises to the perinuclear region. It localises to the cytoskeleton. It is found in the microtubule organizing center. The protein resides in the centrosome. Its subcellular location is the centriole. The protein localises to the spindle. It localises to the midbody. It is found in the chromosome. The protein resides in the perikaryon. Its subcellular location is the cell projection. The protein localises to the growth cone. It localises to the myelin membrane. It carries out the reaction N(6)-acetyl-L-lysyl-[protein] + NAD(+) + H2O = 2''-O-acetyl-ADP-D-ribose + nicotinamide + L-lysyl-[protein]. The catalysed reaction is N(6)-tetradecanoyl-L-lysyl-[protein] + NAD(+) + H2O = 2''-O-tetradecanoyl-ADP-D-ribose + nicotinamide + L-lysyl-[protein]. The enzyme catalyses N(6)-hexadecanoyl-L-lysyl-[protein] + NAD(+) + H2O = 2''-O-hexadecanoyl-ADP-D-ribose + nicotinamide + L-lysyl-[protein]. With respect to regulation, inhibited by Sirtinol, A3 and M15 small molecules. Inhibited by nicotinamide. Inhibited by a macrocyclic peptide inhibitor S2iL5. Inhibited by EP300-induced acetylation. In terms of biological role, NAD-dependent protein deacetylase, which deacetylates internal lysines on histone and alpha-tubulin as well as many other proteins such as key transcription factors. Participates in the modulation of multiple and diverse biological processes such as cell cycle control, genomic integrity, microtubule dynamics, cell differentiation, metabolic networks, and autophagy. Plays a major role in the control of cell cycle progression and genomic stability. Functions in the antephase checkpoint preventing precocious mitotic entry in response to microtubule stress agents, and hence allowing proper inheritance of chromosomes. Positively regulates the anaphase promoting complex/cyclosome (APC/C) ubiquitin ligase complex activity by deacetylating CDC20 and FZR1, then allowing progression through mitosis. Associates both with chromatin at transcriptional start sites (TSSs) and enhancers of active genes. Plays a role in cell cycle and chromatin compaction through epigenetic modulation of the regulation of histone H4 'Lys-20' methylation (H4K20me1) during early mitosis. Specifically deacetylates histone H4 at 'Lys-16' (H4K16ac) between the G2/M transition and metaphase enabling H4K20me1 deposition by KMT5A leading to ulterior levels of H4K20me2 and H4K20me3 deposition throughout cell cycle, and mitotic S-phase progression. Deacetylates KMT5A modulating KMT5A chromatin localization during the mitotic stress response. Also deacetylates histone H3 at 'Lys-57' (H3K56ac) during the mitotic G2/M transition. During oocyte meiosis progression, may deacetylate histone H4 at 'Lys-16' (H4K16ac) and alpha-tubulin, regulating spindle assembly and chromosome alignment by influencing microtubule dynamics and kinetochore function. Deacetylates histone H4 at 'Lys-16' (H4K16ac) at the VEGFA promoter and thereby contributes to regulate expression of VEGFA, a key regulator of angiogenesis. Deacetylates alpha-tubulin at 'Lys-40' and hence controls neuronal motility, oligodendroglial cell arbor projection processes and proliferation of non-neuronal cells. Phosphorylation at Ser-368 by a G1/S-specific cyclin E-CDK2 complex inactivates SIRT2-mediated alpha-tubulin deacetylation, negatively regulating cell adhesion, cell migration and neurite outgrowth during neuronal differentiation. Deacetylates PARD3 and participates in the regulation of Schwann cell peripheral myelination formation during early postnatal development and during postinjury remyelination. Involved in several cellular metabolic pathways. Plays a role in the regulation of blood glucose homeostasis by deacetylating and stabilizing phosphoenolpyruvate carboxykinase PCK1 activity in response to low nutrient availability. Acts as a key regulator in the pentose phosphate pathway (PPP) by deacetylating and activating the glucose-6-phosphate G6PD enzyme, and therefore, stimulates the production of cytosolic NADPH to counteract oxidative damage. Maintains energy homeostasis in response to nutrient deprivation as well as energy expenditure by inhibiting adipogenesis and promoting lipolysis. Attenuates adipocyte differentiation by deacetylating and promoting FOXO1 interaction to PPARG and subsequent repression of PPARG-dependent transcriptional activity. Plays a role in the regulation of lysosome-mediated degradation of protein aggregates by autophagy in neuronal cells. Deacetylates FOXO1 in response to oxidative stress or serum deprivation, thereby negatively regulating FOXO1-mediated autophagy. Deacetylates a broad range of transcription factors and co-regulators regulating target gene expression. Deacetylates transcriptional factor FOXO3 stimulating the ubiquitin ligase SCF(SKP2)-mediated FOXO3 ubiquitination and degradation. Deacetylates HIF1A and therefore promotes HIF1A degradation and inhibition of HIF1A transcriptional activity in tumor cells in response to hypoxia. Deacetylates RELA in the cytoplasm inhibiting NF-kappaB-dependent transcription activation upon TNF-alpha stimulation. Inhibits transcriptional activation by deacetylating p53/TP53 and EP300. Also deacetylates EIF5A. Functions as a negative regulator on oxidative stress-tolerance in response to anoxia-reoxygenation conditions. Plays a role as tumor suppressor. In addition to protein deacetylase activity, also has activity toward long-chain fatty acyl groups and mediates protein-lysine demyristoylation and depalmitoylation of target proteins, such as ARF6 and KRAS, thereby regulating their association with membranes. This chain is NAD-dependent protein deacetylase sirtuin-2 (SIRT2), found in Pongo abelii (Sumatran orangutan).